A 259-amino-acid polypeptide reads, in one-letter code: MSGMCLLIDAGNSRIKWALADTARHFVTSGAFEHASDAPDWSTLPAPRGAWISNVAGDAAAARIDALIEARWPALPRTVVRASAAQCGVTNGYAEPARLGSDRWAGLIGAHAAFADEHLLIATFGTATTLEALRADGHFAGGLIAPGWALMMRSLGMHTAQLPTVSIDAATNLLDELAENDAHAPFAIDTPHALSAGCLQAQAGLIERAWRDLEKAWQAPVRLVLSGGAADAIVRALTVPHTRHDTLVLTGLALIAHSA.

9–16 (DAGNSRIK) provides a ligand contact to ATP. Substrate contacts are provided by residues Tyr93 and 100–103 (GSDR). Asp102 acts as the Proton acceptor in catalysis. Position 126 (Thr126) interacts with ATP. Residue Thr190 coordinates substrate.

It belongs to the type III pantothenate kinase family. Homodimer. The cofactor is NH4(+). It depends on K(+) as a cofactor.

It is found in the cytoplasm. The catalysed reaction is (R)-pantothenate + ATP = (R)-4'-phosphopantothenate + ADP + H(+). It functions in the pathway cofactor biosynthesis; coenzyme A biosynthesis; CoA from (R)-pantothenate: step 1/5. Functionally, catalyzes the phosphorylation of pantothenate (Pan), the first step in CoA biosynthesis. This chain is Type III pantothenate kinase, found in Burkholderia pseudomallei (strain K96243).